The sequence spans 238 residues: Small heat shock protein, chloroplastic (238 aa).

Positions 31-87 are disordered; that stretch reads APLSTGGRTRPLSVASAAQENRDNSVDVQVSQAQNAGNQQGNAVQRRPRRAGFDISP. The segment covering 58 to 75 has biased composition (low complexity); that stretch reads VQVSQAQNAGNQQGNAVQ. Positions 124–238 constitute a sHSP domain; it reads AARARRRMPW…ERKVIDVQVQ (115 aa).

It belongs to the small heat shock protein (HSP20) family.

The protein localises to the plastid. Its subcellular location is the chloroplast. This Triticum aestivum (Wheat) protein is Small heat shock protein, chloroplastic (HSP21).